We begin with the raw amino-acid sequence, 101 residues long: Small ribosomal subunit protein uS14 (101 aa).

This sequence belongs to the universal ribosomal protein uS14 family. Part of the 30S ribosomal subunit. Contacts proteins S3 and S10.

Its function is as follows. Binds 16S rRNA, required for the assembly of 30S particles and may also be responsible for determining the conformation of the 16S rRNA at the A site. In Nitrosospira multiformis (strain ATCC 25196 / NCIMB 11849 / C 71), this protein is Small ribosomal subunit protein uS14.